A 202-amino-acid chain; its full sequence is Small ribosomal subunit protein uS4c (202 aa).

Residues 90 to 153 (MRLDNVIFRL…KSETIISKNI (64 aa)) form the S4 RNA-binding domain.

The protein belongs to the universal ribosomal protein uS4 family. In terms of assembly, part of the 30S ribosomal subunit. Contacts protein S5. The interaction surface between S4 and S5 is involved in control of translational fidelity.

It localises to the plastid. The protein resides in the chloroplast. In terms of biological role, one of the primary rRNA binding proteins, it binds directly to 16S rRNA where it nucleates assembly of the body of the 30S subunit. Its function is as follows. With S5 and S12 plays an important role in translational accuracy. The polypeptide is Small ribosomal subunit protein uS4c (rps4) (Hylocomium splendens (Glittering wood-moss)).